We begin with the raw amino-acid sequence, 207 residues long: Guanylate kinase (207 aa).

Residues 4 to 184 form the Guanylate kinase-like domain; the sequence is GTLYIVSAPS…ALMDFKAIIR (181 aa). 11-18 provides a ligand contact to ATP; that stretch reads APSGAGKS.

The protein belongs to the guanylate kinase family.

Its subcellular location is the cytoplasm. The enzyme catalyses GMP + ATP = GDP + ADP. It catalyses the reaction dZMP + ATP = dZDP + ADP. It participates in purine metabolism. Its function is as follows. Essential for recycling GMP and indirectly, cGMP. Functionally, (Microbial infection) Catalyzes the phosphorylation of dZMP to dZDP, when the bacterium is infected by a phage that produces the substrate for the synthesis of dZTP (2- amino-2'-deoxyadenosine 5'-triphosphate), which is then used by the phage as a DNA polymerase substrate. The protein is Guanylate kinase (gmk) of Vibrio cholerae serotype O1 (strain ATCC 39315 / El Tor Inaba N16961).